Consider the following 919-residue polypeptide: PAX3- and PAX7-binding protein 1 (919 aa).

The span at 1-11 (MFRKARRVNVR) shows a compositional bias: basic residues. 3 disordered regions span residues 1–120 (MFRK…ENEE), 151–206 (KTEL…GGAF), and 237–277 (AREL…RIVF). A Phosphoserine modification is found at serine 16. Positions 16 to 28 (SEEEERERDEEQE) are enriched in acidic residues. A compositionally biased stretch (low complexity) spans 49–59 (RAPAGESLLGP). Gly residues predominate over residues 75 to 87 (AEAGGGISGGAEP). Lysine 151 participates in a covalent cross-link: Glycyl lysine isopeptide (Lys-Gly) (interchain with G-Cter in SUMO1); alternate. Lysine 151 is covalently cross-linked (Glycyl lysine isopeptide (Lys-Gly) (interchain with G-Cter in SUMO2); alternate). Residue serine 160 is modified to Phosphoserine. A compositionally biased stretch (basic and acidic residues) spans 163-174 (PLDKTCHAKDTN). A compositionally biased stretch (acidic residues) spans 185–195 (GEDEMDMESEK). Serine 193 is modified (phosphoserine). Positions 237–258 (ARELGDFTPHDSEPGKGRLVRE) are enriched in basic and acidic residues. Residues 259–270 (DENDASDDEDDD) show a composition bias toward acidic residues. Residues serine 264, serine 297, serine 559, and serine 560 each carry the phosphoserine modification. A necessary and sufficient for interaction with PAX7 region spans residues 380–560 (TPSNEMAPVT…MADHLEGLSS (181 aa)). The tract at residues 533–566 (EREARRTRRRQAREQTGQMADHLEGLSSDDEETS) is disordered. Residue threonine 565 is modified to Phosphothreonine.

This sequence belongs to the GCF family. In terms of assembly, interacts with PAX3 and PAX7. Interacts with WDR5; associates with a histone methyltransferase (HMT) complex composed at least of RBBP5, ASH2L, SET1, SET2 and KMT2A/MLL1, KMT2D/MLL2, KMT2C/MLL3 and KMT2B/MLL4 through direct interaction with WDR5. Ubiquitously expressed in all tissues tested including skeletal muscle. Expressed in primary myoblasts.

It localises to the nucleus. Adapter protein linking the transcription factors PAX3 and PAX7 to the histone methylation machinery and involved in myogenesis. Associates with a histone methyltransferase complex that specifically mediates dimethylation and trimethylation of 'Lys-4' of histone H3. Mediates the recruitment of that complex to the transcription factors PAX3 and PAX7 on chromatin to regulate the expression of genes involved in muscle progenitor cells proliferation including ID3 and CDC20. The polypeptide is PAX3- and PAX7-binding protein 1 (Paxbp1) (Mus musculus (Mouse)).